The following is a 762-amino-acid chain: cGMP-dependent protein kinase 2 (762 aa).

Residues 1–26 form a disordered region; the sequence is MGNGSVKPKHAKHPDGHSGNLSNEAL. Gly2 carries N-myristoyl glycine lipidation. Ser110 and Ser117 each carry phosphoserine. The segment at 118 to 138 is disordered; the sequence is RRGAKAGVSAEPTTRTYDLNK. The tract at residues 168-283 is cGMP-binding, high affinity; cAMP-binding, moderate affinity; it reads FLKRLDPQQI…DEEYRNFLRS (116 aa). 3',5'-cyclic GMP is bound by residues 232–235, 242–243, Lys347, 356–359, 366–367, Asp412, and Arg415; these read GELA, RT, GEKA, and RS. A cGMP-binding, high affinity; cAMP-binding, low affinity region spans residues 286–416; that stretch reads LLKNLPEDKL…TLNRDDEKRH (131 aa). Ser431 carries the post-translational modification Phosphoserine. The Protein kinase domain occupies 453–711; the sequence is LEIIATLGVG…INDIKKHRWL (259 aa). ATP-binding positions include 459-467 and Lys482; that span reads LGVGGFGRV. Asp576 functions as the Proton acceptor in the catalytic mechanism. Thr609 carries the post-translational modification Phosphothreonine. Residues 712–762 enclose the AGC-kinase C-terminal domain; the sequence is NGFNWEGLKARSLPSPLRRELSGPIDHSYFDKYPPEKGVPPDEMSGWDKDF. The interval 740–762 is disordered; sequence YFDKYPPEKGVPPDEMSGWDKDF.

The protein belongs to the protein kinase superfamily. AGC Ser/Thr protein kinase family. cGMP subfamily. In terms of assembly, interacts with GRIA1/GLUR1. Post-translationally, myristoylation mediates membrane localization.

Its subcellular location is the apical cell membrane. The protein resides in the cell membrane. The catalysed reaction is L-seryl-[protein] + ATP = O-phospho-L-seryl-[protein] + ADP + H(+). It catalyses the reaction L-threonyl-[protein] + ATP = O-phospho-L-threonyl-[protein] + ADP + H(+). Its activity is regulated as follows. Binding of cGMP results in enzyme activation. Crucial regulator of intestinal secretion and bone growth. Phosphorylates and activates CFTR on the plasma membrane. Plays a key role in intestinal secretion by regulating cGMP-dependent translocation of CFTR in jejunum. Acts downstream of NMDAR to activate the plasma membrane accumulation of GRIA1/GLUR1 in synapse and increase synaptic plasticity. Phosphorylates GRIA1/GLUR1 at Ser-863. Acts as a regulator of gene expression and activator of the extracellular signal-regulated kinases MAPK3/ERK1 and MAPK1/ERK2 in mechanically stimulated osteoblasts. Under fluid shear stress, mediates ERK activation and subsequent induction of FOS, FOSL1/FRA1, FOSL2/FRA2 and FOSB that play a key role in the osteoblast anabolic response to mechanical stimulation. The polypeptide is cGMP-dependent protein kinase 2 (Prkg2) (Mus musculus (Mouse)).